Reading from the N-terminus, the 248-residue chain is 3-deoxy-manno-octulosonate cytidylyltransferase (248 aa).

This sequence belongs to the KdsB family.

It localises to the cytoplasm. The enzyme catalyses 3-deoxy-alpha-D-manno-oct-2-ulosonate + CTP = CMP-3-deoxy-beta-D-manno-octulosonate + diphosphate. Its pathway is nucleotide-sugar biosynthesis; CMP-3-deoxy-D-manno-octulosonate biosynthesis; CMP-3-deoxy-D-manno-octulosonate from 3-deoxy-D-manno-octulosonate and CTP: step 1/1. It functions in the pathway bacterial outer membrane biogenesis; lipopolysaccharide biosynthesis. Activates KDO (a required 8-carbon sugar) for incorporation into bacterial lipopolysaccharide in Gram-negative bacteria. The protein is 3-deoxy-manno-octulosonate cytidylyltransferase of Klebsiella pneumoniae subsp. pneumoniae (strain ATCC 700721 / MGH 78578).